A 72-amino-acid chain; its full sequence is Translation initiation factor IF-1 (72 aa).

The S1-like domain occupies 1-72 (MAKDDVIQMQ…SRARIVFRAK (72 aa)).

This sequence belongs to the IF-1 family. As to quaternary structure, component of the 30S ribosomal translation pre-initiation complex which assembles on the 30S ribosome in the order IF-2 and IF-3, IF-1 and N-formylmethionyl-tRNA(fMet); mRNA recruitment can occur at any time during PIC assembly.

It is found in the cytoplasm. Its function is as follows. One of the essential components for the initiation of protein synthesis. Stabilizes the binding of IF-2 and IF-3 on the 30S subunit to which N-formylmethionyl-tRNA(fMet) subsequently binds. Helps modulate mRNA selection, yielding the 30S pre-initiation complex (PIC). Upon addition of the 50S ribosomal subunit IF-1, IF-2 and IF-3 are released leaving the mature 70S translation initiation complex. This is Translation initiation factor IF-1 from Burkholderia mallei (strain NCTC 10247).